The primary structure comprises 166 residues: UPF0336 protein ML1908 (166 aa).

Belongs to the UPF0336 family.

The polypeptide is UPF0336 protein ML1908 (Mycobacterium leprae (strain TN)).